Here is a 148-residue protein sequence, read N- to C-terminus: Large ribosomal subunit protein uL15 (148 aa).

The tract at residues 18–38 is disordered; the sequence is GYGRVGKHRKHPGGRGNAGGL.

The protein belongs to the universal ribosomal protein uL15 family.

The polypeptide is Large ribosomal subunit protein uL15 (rpl27a) (Dictyostelium discoideum (Social amoeba)).